We begin with the raw amino-acid sequence, 1123 residues long: Phytochrome 1 (1123 aa).

The span at 1-15 shows a compositional bias: low complexity; that stretch reads MSTPKKTYSSTSSAK. Residues 1-20 are disordered; sequence MSTPKKTYSSTSSAKSKAHS. One can recognise a GAF domain in the interval 216-395; that stretch reads DIGLLCDTVV…VFGLQLNMEV (180 aa). Residue C321 participates in phytochromobilin binding. PAS domains follow at residues 610–681 and 744–815; these read VANE…LRGE and DYKT…TKFM. The Histidine kinase domain occupies 895–1115; sequence YIRQEIKNPL…VVNVELPMAQ (221 aa).

Belongs to the phytochrome family. As to quaternary structure, homodimer. Post-translationally, contains one covalently linked phytochromobilin chromophore.

The protein resides in the cytoplasm. Regulatory photoreceptor which exists in two forms that are reversibly interconvertible by light: the Pr form that absorbs maximally in the red region of the spectrum and the Pfr form that absorbs maximally in the far-red region. Photoconversion of Pr to Pfr induces an array of morphogenetic responses, whereas reconversion of Pfr to Pr cancels the induction of those responses. Pfr controls the expression of a number of nuclear genes including those encoding the small subunit of ribulose-bisphosphate carboxylase, chlorophyll A/B binding protein, protochlorophyllide reductase, rRNA, etc. It also controls the expression of its own gene(s) in a negative feedback fashion. Mediates chloroplast avoidance movement in cytoplasm. In Physcomitrium patens (Spreading-leaved earth moss), this protein is Phytochrome 1 (PHY1).